The primary structure comprises 364 residues: Ribosomal RNA large subunit methyltransferase M (364 aa).

S-adenosyl-L-methionine is bound by residues Ser194, 227–230 (CPGG), Asp246, Asp266, and Asp284. The active-site Proton acceptor is the Lys313.

The protein belongs to the class I-like SAM-binding methyltransferase superfamily. RNA methyltransferase RlmE family. RlmM subfamily. In terms of assembly, monomer.

The protein resides in the cytoplasm. It catalyses the reaction cytidine(2498) in 23S rRNA + S-adenosyl-L-methionine = 2'-O-methylcytidine(2498) in 23S rRNA + S-adenosyl-L-homocysteine + H(+). In terms of biological role, catalyzes the 2'-O-methylation at nucleotide C2498 in 23S rRNA. The protein is Ribosomal RNA large subunit methyltransferase M of Actinobacillus succinogenes (strain ATCC 55618 / DSM 22257 / CCUG 43843 / 130Z).